Here is a 431-residue protein sequence, read N- to C-terminus: Histidine--tRNA ligase (431 aa).

Belongs to the class-II aminoacyl-tRNA synthetase family. Homodimer.

Its subcellular location is the cytoplasm. The enzyme catalyses tRNA(His) + L-histidine + ATP = L-histidyl-tRNA(His) + AMP + diphosphate + H(+). In Neisseria meningitidis serogroup C / serotype 2a (strain ATCC 700532 / DSM 15464 / FAM18), this protein is Histidine--tRNA ligase.